The primary structure comprises 203 residues: MRPMTRKTRIQPIEHAVEDDDNGYDRPSKSQLKREMHALQELGQALVDLPKDALKRMPMPEDLADAVREARRITDHEGKRRQLQYVGRVMRSLTDDETAALRTALDAQRGVNKAATARLHWIERTREQLLASDDALTEFLRQHPDADIQEGRTLIRNARKEAQQGKPPRYFRELFQWIKAAGGASDSDDEAAGDAGDDHDDEA.

2 disordered regions span residues 1–31 (MRPM…SKSQ) and 183–203 (GASD…DDEA). Residues 186 to 203 (DSDDEAAGDAGDDHDDEA) are compositionally biased toward acidic residues.

The protein belongs to the DarP family.

Its subcellular location is the cytoplasm. In terms of biological role, member of a network of 50S ribosomal subunit biogenesis factors which assembles along the 30S-50S interface, preventing incorrect 23S rRNA structures from forming. Promotes peptidyl transferase center (PTC) maturation. This is Dual-action ribosomal maturation protein DarP from Burkholderia cenocepacia (strain ATCC BAA-245 / DSM 16553 / LMG 16656 / NCTC 13227 / J2315 / CF5610) (Burkholderia cepacia (strain J2315)).